The primary structure comprises 400 residues: Enoyl-[acyl-carrier-protein] reductase [NADH] 1 (400 aa).

Residues 48–53 (GSSSGY), 74–75 (FE), 111–112 (DA), and 139–140 (LA) contribute to the NAD(+) site. Substrate is bound at residue Tyr-225. The Proton donor role is filled by Tyr-235. Residues Lys-244 and 273-275 (VVT) each bind NAD(+).

It belongs to the TER reductase family. In terms of assembly, monomer.

It carries out the reaction a 2,3-saturated acyl-[ACP] + NAD(+) = a (2E)-enoyl-[ACP] + NADH + H(+). It functions in the pathway lipid metabolism; fatty acid biosynthesis. In terms of biological role, involved in the final reduction of the elongation cycle of fatty acid synthesis (FAS II). Catalyzes the reduction of a carbon-carbon double bond in an enoyl moiety that is covalently linked to an acyl carrier protein (ACP). This is Enoyl-[acyl-carrier-protein] reductase [NADH] 1 from Photobacterium profundum (strain SS9).